A 72-amino-acid chain; its full sequence is UPF0150 protein jhp_0960 (72 aa).

It belongs to the UPF0150 family.

The sequence is that of UPF0150 protein jhp_0960 from Helicobacter pylori (strain J99 / ATCC 700824) (Campylobacter pylori J99).